The primary structure comprises 112 residues: Small ribosomal subunit protein bS6c (112 aa).

Belongs to the bacterial ribosomal protein bS6 family.

The protein resides in the plastid. The protein localises to the chloroplast. In terms of biological role, binds together with bS18 to 16S ribosomal RNA. The chain is Small ribosomal subunit protein bS6c (rps6) from Porphyra purpurea (Red seaweed).